Here is a 172-residue protein sequence, read N- to C-terminus: Adenine phosphoribosyltransferase (172 aa).

The protein belongs to the purine/pyrimidine phosphoribosyltransferase family. Homodimer.

The protein resides in the cytoplasm. The catalysed reaction is AMP + diphosphate = 5-phospho-alpha-D-ribose 1-diphosphate + adenine. It functions in the pathway purine metabolism; AMP biosynthesis via salvage pathway; AMP from adenine: step 1/1. Functionally, catalyzes a salvage reaction resulting in the formation of AMP, that is energically less costly than de novo synthesis. The protein is Adenine phosphoribosyltransferase of Latilactobacillus sakei subsp. sakei (strain 23K) (Lactobacillus sakei subsp. sakei).